A 332-amino-acid chain; its full sequence is Phospholipase A2 inhibitor beta (332 aa).

Residues 1–23 form the signal peptide; the sequence is MKSSVPSLLFVSLVMSLNSYTQQ. Asparagine 35 is a glycosylation site (N-linked (GlcNAc...) asparagine). 8 LRR repeats span residues 78–101, 103–125, 127–149, 150–173, 175–197, 198–221, 223–245, and 247–269; these read LPNLQELHLSNNRLKTLPSGLFRN, PELHTLDLSTNLLEDLPPEIFTS, TSLTLLSISENRLAKLRLSWFET, LKELRILSLDNNQLKEVPISCFDK, EKLTFLDLSSNHLHRLSPDMFSG, LDNLERLSLENNPIRCIAPKSFHG, PKLSIISLKNCSLTNIITGVFQP, and NHXVLLDLSDNELTMLDPPVAIP. N-linked (GlcNAc...) asparagine glycosylation is present at asparagine 232. Asparagine 272 is a glycosylation site (N-linked (GlcNAc...) asparagine). The 52-residue stretch at 280–331 folds into the LRRCT domain; sequence NPWACNCRMDNLLTWVKEHKIDLYSKQEIVCAFPKSFKGEEATSLHRSQICP.

Belongs to the beta-type phospholipase A2 inhibitor family. As to quaternary structure, homotrimer.

The protein localises to the secreted. Functionally, inhibits the enzymatic activity of the basic phospholipase A2 (PLA2). The chain is Phospholipase A2 inhibitor beta from Elaphe climacophora (Japanese rat snake).